The chain runs to 470 residues: Acetyl-CoA decarbonylase/synthase complex subunit gamma (470 aa).

A 4Fe-4S domain is found at 1 to 62; that stretch reads MKVKSPLEVY…DPKVKKKLEE (62 aa). Residues Cys-18, Cys-21, Cys-26, and Cys-43 each coordinate [4Fe-4S] cluster.

Heterodimer of delta and gamma chains. The ACDS complex is made up of alpha, epsilon, beta, gamma and delta chains with a probable stoichiometry of (alpha(2)epsilon(2))(4)-beta(8)-(gamma(1)delta(1))(8). Corrinoid serves as cofactor. [4Fe-4S] cluster is required as a cofactor.

The enzyme catalyses 5,6,7,8-tetrahydrosarcinapterin + methyl-Co(III)-[corrinoid Fe-S protein] = 5-methyltetrahydrosarcinapterin + Co(I)-[corrinoid Fe-S protein] + H(+). Part of a complex that catalyzes the reversible cleavage of acetyl-CoA, allowing autotrophic growth from CO(2). In Archaeoglobus fulgidus (strain ATCC 49558 / DSM 4304 / JCM 9628 / NBRC 100126 / VC-16), this protein is Acetyl-CoA decarbonylase/synthase complex subunit gamma.